A 65-amino-acid polypeptide reads, in one-letter code: Cecropin (65 aa).

Positions 1-23 are cleaved as a signal peptide; the sequence is MNFVKVLFFISACILIMLSAVSG.

Belongs to the cecropin family.

It is found in the secreted. Its function is as follows. Has antibacterial activity. This chain is Cecropin (LOC113514368), found in Galleria mellonella (Greater wax moth).